The following is a 534-amino-acid chain: Pentatricopeptide repeat-containing protein At5g50990 (534 aa).

PPR repeat units lie at residues Asn128 to Phe158, Asn164 to Leu198, Asn199 to Asn229, Asp230 to Pro264, Asp265 to Arg295, and Lys301 to Glu331. A type E motif region spans residues Ile336–Gly408. The tract at residues Gly409–Lys439 is type E(+) motif. The type DYW motif stretch occupies residues Ser440–Trp534.

The protein belongs to the PPR family. PCMP-H subfamily.

In Arabidopsis thaliana (Mouse-ear cress), this protein is Pentatricopeptide repeat-containing protein At5g50990 (PCMP-H59).